We begin with the raw amino-acid sequence, 230 residues long: MAKRGKKYVEAAKLVDRAAAYSATEAVELVKKTNTAKFDATVEAAFRLGVDPKKADQQIRGAVVLPHGTGKVQRVLVFAKGEKAKEAEAAGADFVGDTDYIGKIQQGWFDFDVVVATPDMMGEVGKLGRVLGPKGLMPNPKTGTVTFDVTKAVNEIKAGKVEYRVDKAGNIHVPIGKVSFEDAKLVENFKTIADTLQKVKPAAAKGTYMKNVTVASTMGPGVRVDVSTLA.

This sequence belongs to the universal ribosomal protein uL1 family. As to quaternary structure, part of the 50S ribosomal subunit.

Binds directly to 23S rRNA. The L1 stalk is quite mobile in the ribosome, and is involved in E site tRNA release. In terms of biological role, protein L1 is also a translational repressor protein, it controls the translation of the L11 operon by binding to its mRNA. In Bacillus cereus (strain B4264), this protein is Large ribosomal subunit protein uL1.